The chain runs to 447 residues: Dihydroorotase (447 aa).

2 residues coordinate Zn(2+): His81 and His83. Substrate-binding positions include 83–85 (HFR) and Asn115. Asp171, His198, and His252 together coordinate Zn(2+). Residue Asn298 coordinates substrate. Residue Asp325 participates in Zn(2+) binding. Asp325 is a catalytic residue. Residues His329 and 343–344 (FG) contribute to the substrate site.

The protein belongs to the metallo-dependent hydrolases superfamily. DHOase family. Class I DHOase subfamily. Zn(2+) is required as a cofactor.

The catalysed reaction is (S)-dihydroorotate + H2O = N-carbamoyl-L-aspartate + H(+). Its pathway is pyrimidine metabolism; UMP biosynthesis via de novo pathway; (S)-dihydroorotate from bicarbonate: step 3/3. Functionally, catalyzes the reversible cyclization of carbamoyl aspartate to dihydroorotate. The chain is Dihydroorotase from Ehrlichia chaffeensis (strain ATCC CRL-10679 / Arkansas).